An 84-amino-acid polypeptide reads, in one-letter code: Putative glutaredoxin MT3292 (84 aa).

Residues 1-84 (MITAALTIYT…VKAKLVKIAG (84 aa)) form the Glutaredoxin domain.

In Mycobacterium tuberculosis (strain CDC 1551 / Oshkosh), this protein is Putative glutaredoxin MT3292.